We begin with the raw amino-acid sequence, 83 residues long: Small ribosomal subunit protein bS16 (83 aa).

It belongs to the bacterial ribosomal protein bS16 family.

This chain is Small ribosomal subunit protein bS16, found in Thermosynechococcus vestitus (strain NIES-2133 / IAM M-273 / BP-1).